The chain runs to 292 residues: GTP cyclohydrolase FolE2 (292 aa).

This sequence belongs to the GTP cyclohydrolase IV family.

The catalysed reaction is GTP + H2O = 7,8-dihydroneopterin 3'-triphosphate + formate + H(+). The protein operates within cofactor biosynthesis; 7,8-dihydroneopterin triphosphate biosynthesis; 7,8-dihydroneopterin triphosphate from GTP: step 1/1. In terms of biological role, converts GTP to 7,8-dihydroneopterin triphosphate. The polypeptide is GTP cyclohydrolase FolE2 (Staphylococcus saprophyticus subsp. saprophyticus (strain ATCC 15305 / DSM 20229 / NCIMB 8711 / NCTC 7292 / S-41)).